A 250-amino-acid polypeptide reads, in one-letter code: MLFLHDVWVNWFEGEENGYNVCHFHEWRKEDSVELLDQVPLLKVQSPLYDYIENDLSELPKTLLESVFEKSYIRKNHERRKLEYCFVVTDGIRIIAVDTIGYSIPVRKSRLIPRQEQLVYEMVKDVKAEEYEFSQDSLESSKEYHILSLPPQHISGLTRKERQLKQLMFMALDQLKGLQNRAEIAYWYTEWNPRMYNQIKRMSFEEIWNMLYNETIDGWSENHLAFCEKMIKGQPFFEKLWEMENESKVN.

This sequence belongs to the UPF0736 family.

This Bacillus pumilus (strain SAFR-032) protein is UPF0736 protein BPUM_1067.